We begin with the raw amino-acid sequence, 809 residues long: Glutamine--tRNA ligase (809 aa).

Residues 185 to 198 show a composition bias toward basic and acidic residues; it reads DLIKKKTKNNEKKK. Residues 185 to 216 form a disordered region; the sequence is DLIKKKTKNNEKKKTNSAKKSSDNSASSGPKR. A 'HIGH' region motif is present at residues 258–268; that stretch reads PEPNGYLHIGH. ATP contacts are provided by residues 259 to 261 and 265 to 271; these read EPN and HIGHSKA. Residue D291 participates in L-glutamine binding. S378 is modified (phosphoserine). Y440 serves as a coordination point for L-glutamine. ATP contacts are provided by residues T459, 488-489, and 496-498; these read RL and LSK. Positions 495-499 match the 'KMSKS' region motif; sequence VLSKR.

It belongs to the class-I aminoacyl-tRNA synthetase family.

The enzyme catalyses tRNA(Gln) + L-glutamine + ATP = L-glutaminyl-tRNA(Gln) + AMP + diphosphate. In Saccharomyces cerevisiae (strain ATCC 204508 / S288c) (Baker's yeast), this protein is Glutamine--tRNA ligase (GLN4).